The following is a 10061-amino-acid chain: MATH and LRR domain-containing protein PFE0570w (10061 aa).

Disordered regions lie at residues 166–210 (DMDN…EKKN), 244–471 (NNSD…NDIN), and 1004–1170 (DDQK…DTSF). A compositionally biased stretch (polar residues) spans 169-179 (NNPNNHVSNNG). The segment covering 193 to 205 (TSNSIHKNNNTNI) has biased composition (low complexity). Residues 270-282 (KKSDNNNDKKNDD) show a composition bias toward basic and acidic residues. The segment covering 285 to 320 (NNNNNNNNNNNNNNNNNDNHVCTSNNQPNTINKQNN) has biased composition (low complexity). A compositionally biased stretch (polar residues) spans 328-338 (DQNGRTKITPQ). Residues 338–366 (QNVNQKEKEIKNVVKEKNNFNREEKDITN) are a coiled coil. Residues 342–365 (QKEKEIKNVVKEKNNFNREEKDIT) show a composition bias toward basic and acidic residues. A compositionally biased stretch (acidic residues) spans 366–375 (NSDDYDENST). Composition is skewed to polar residues over residues 376–389 (DESC…TSSE) and 421–437 (VPSN…SAEN). Positions 431–469 (NVKSAENCNKEKKKKKKKKKKELNNDNKDNTLNNETMND) form a coiled coil. Residues 441–451 (EKKKKKKKKKK) show a composition bias toward basic residues. The segment covering 460 to 471 (NTLNNETMNDIN) has biased composition (low complexity). A compositionally biased stretch (basic and acidic residues) spans 1025 to 1037 (NEEKPNVNKEGNI). Residues 1047–1057 (NKNKNNNNNNN) show a composition bias toward low complexity. Basic and acidic residues predominate over residues 1058 to 1132 (DKNDKNDKND…KKKKNGKEQN (75 aa)). A compositionally biased stretch (acidic residues) spans 1133 to 1165 (EDSTESDDESSVIDDNYIDDDSCDCDSESDSID). The 131-residue stretch at 1328–1458 (NGKIELYIPN…SGGLLIKGKV (131 aa)) folds into the MATH domain. The interval 1651–1698 (GGNLQNEQKGDEDVKKEDVKKENVNKEEIKNGNNNNNNDENENEVDDN) is disordered. Positions 1658-1680 (QKGDEDVKKEDVKKENVNKEEIK) are enriched in basic and acidic residues. Residues 1916–1948 (NYLSNLNKVKININDLNNNIVDVNNSIHNIEKE) adopt a coiled-coil conformation. Residues 1973 to 1995 (HKETSSIQNKGKEKSNNNIKSDD) are compositionally biased toward basic and acidic residues. Disordered stretches follow at residues 1973 to 1998 (HKET…DNNN), 2155 to 2245 (LNKS…PSYK), 2427 to 2566 (YSDD…NNIK), and 3120 to 3139 (SNET…NEMK). Residues 2216-2228 (NNDDKDDDDDDSY) show a composition bias toward acidic residues. The span at 2235–2245 (SDGKKNDPSYK) shows a compositional bias: basic and acidic residues. The span at 2475–2484 (NNNNNNNNMM) shows a compositional bias: low complexity. Basic and acidic residues-rich tracts occupy residues 2487–2496 (DDNKVNKNEE) and 2505–2527 (QIKE…RNED). Composition is skewed to low complexity over residues 2552–2564 (NNNN…NNNN) and 3121–3133 (NETN…NRTN). Residues 2555 to 2580 (NNNNNNNNNNIKRLDDSYNKLLKNKN) adopt a coiled-coil conformation. A helical transmembrane segment spans residues 3398 to 3418 (KLILKKIFMYLNIICMIIKYI). 3 disordered regions span residues 3802 to 3826 (STND…YSKK), 3847 to 3890 (LTSG…DNNN), and 3919 to 3953 (ESND…EKKS). Over residues 3809–3822 (VDRSDDSESNDDKK) the composition is skewed to basic and acidic residues. Residues 3851–3890 (NSSSKNSKKNSNNESIQMDNTNNSNSNNNNKNDNNNDNNN) show a composition bias toward low complexity. The span at 3926-3941 (KNQNIQSNEQSVTPNR) shows a compositional bias: polar residues. The segment covering 3942–3953 (NIEENKDHEKKS) has biased composition (basic and acidic residues). The stretch at 3977 to 4001 (EHLGNATAVLNILQKKLENEELKKL) forms a coiled coil. A compositionally biased stretch (basic and acidic residues) spans 4039–4065 (VSAHKEKNVKTDSSDDKKKKEDNENNN). Disordered stretches follow at residues 4039-4074 (VSAH…IIHN), 4155-4180 (KGNN…NNMG), 4352-4414 (SNNN…NNNN), 4919-4943 (NKRK…DNDN), 4991-5030 (DGLN…KNEK), and 5179-5207 (SKIA…KSNL). The span at 4157-4178 (NNSKDNNNNNNNNNNNNNNKNN) shows a compositional bias: low complexity. Positions 4399–4424 (NNNNNNNNNNNNNNNNVNKEIIKLNS) form a coiled coil. 3 stretches are compositionally biased toward low complexity: residues 4929–4943 (NNNN…DNDN), 5004–5019 (NMNN…NNSN), and 5185–5202 (NGNN…NNNN). Residues 5006-5046 (NNVKNKNNNNNNSNNKRKKNEKNEKIDKIEQFLHESELEKD) adopt a coiled-coil conformation. 3 coiled-coil regions span residues 5486-5563 (NNNN…NIYE), 5728-5810 (DVLK…DKEE), and 5900-6022 (MNND…INNY). Basic and acidic residues-rich tracts occupy residues 5716 to 5732 (KDAK…VLKD), 5738 to 5811 (SNKE…KEEP), and 5909 to 5953 (NKNK…KKDN). Disordered stretches follow at residues 5716-5816 (KDAK…QINE), 5892-6009 (EIIN…KKLK), 6123-6142 (KSET…VDGK), 6299-6338 (NDSI…DKGE), 6722-6760 (NMNN…NNNI), 7585-7730 (EDML…VEEK), and 7744-7787 (DLLS…KKSS). The span at 5954 to 5968 (NNSNNNNNNNNLSNN) shows a compositional bias: low complexity. Residues 5969 to 5978 (GEEDPNDSDS) show a composition bias toward acidic residues. Residues 5991–6003 (NKNINDDSDDNNK) show a composition bias toward basic and acidic residues. Residues 6129–6138 (SNKNVESNDN) show a composition bias toward polar residues. Low complexity-rich tracts occupy residues 6314–6333 (SNSN…NNNN) and 6722–6759 (NMNN…NNNN). A coiled-coil region spans residues 6719–6743 (NMNNMNNNNNNNNNNNNNNNNNNNN). A compositionally biased stretch (basic and acidic residues) spans 7585-7599 (EDMLHSKKTDVIQHG). Residues 7600–7685 (DEEEDDEEDD…EHINEEEQED (86 aa)) show a composition bias toward acidic residues. Coiled-coil stretches lie at residues 7601–7637 (EEED…DIED), 7710–7813 (NTKI…NKNE), 7934–7961 (KTDE…IDNE), and 8217–8241 (NINN…GKRE). Residues 7749–7765 (SKKKNHKDKRNASKNKN) are compositionally biased toward basic residues. Residues 7766–7786 (KNKDILKKNENNINDEKEKKS) show a composition bias toward basic and acidic residues. Disordered stretches follow at residues 8189–8252 (ETGG…GGEE), 8293–8380 (GKVS…IIMS), and 8474–8497 (KKKN…MDEE). Basic and acidic residues predominate over residues 8218–8242 (INNKEKETNKNEEQQQGEAEGKREG). Residues 8243-8252 (EGEEGEGGEE) show a composition bias toward acidic residues. The span at 8305 to 8314 (LLNDKEHEKD) shows a compositional bias: basic and acidic residues. The segment covering 8315–8363 (NEDNDEDNDEDDDDEDDDEDDEDDDDDDDDDDDDDDDDDYDEDYDEDYD) has biased composition (acidic residues). Over residues 8364-8374 (EKLVENKKNER) the composition is skewed to basic and acidic residues. Over residues 8478-8492 (YSNNNIYNNNSSNKV) the composition is skewed to low complexity. Coiled coils occupy residues 8644-8697 (SETL…ELNN), 8882-8907 (QYLE…VDNY), and 9219-9247 (IDMK…SNNN). Disordered regions lie at residues 9759 to 9779 (TIPR…NNNS), 9891 to 9926 (SNTS…SSSN), and 9985 to 10061 (KNNS…NNIY). 3 stretches are compositionally biased toward low complexity: residues 9764–9779 (NTTT…NNNS), 9899–9926 (NSSN…SSSN), and 9986–10022 (NNSI…NNNT). The span at 10031 to 10041 (IFQQNQNHSDT) shows a compositional bias: polar residues. The segment covering 10042 to 10061 (NNNNNNNNKNNSNNNNNNIY) has biased composition (low complexity).

It localises to the membrane. This is MATH and LRR domain-containing protein PFE0570w from Plasmodium falciparum (isolate 3D7).